The chain runs to 2194 residues: Nucleosome-remodeling factor subunit NURF301-like (2194 aa).

Basic residues predominate over residues 1 to 12; the sequence is MAPPRGRSKRKH. The interval 1–137 is disordered; it reads MAPPRGRSKR…EEEESSDDEF (137 aa). The segment covering 60–79 has biased composition (basic and acidic residues); that stretch reads AQRETPSDAEEVEVKIEEIS. Residues 80 to 93 are compositionally biased toward polar residues; it reads VRSTPASTPAPKST. Over residues 94-112 the composition is skewed to basic residues; that stretch reads SKARGRPKKNPTPPRRKSL. Positions 118-137 are enriched in acidic residues; that stretch reads DIIYMDEDSEEEEESSDDEF. DDT domains follow at residues 196 to 256 and 341 to 396; these read TASI…SDDE and VGKF…SAVR. The PHD-type 1 zinc-finger motif lies at 347 to 392; that stretch reads DENCRVCGKSSGRVVGCTQCEAAFHVECSHLKPFPEVLVCNICKKN. 5 disordered regions span residues 1091–1122, 1158–1255, 1413–1433, 1657–1701, and 1834–1888; these read ESWLSRNRGGSSEFSHRSSSARKKRPQRSLDN, AKRK…PQPN, TSNFDAQRAQQQHPQSRPVYS, MRQE…SNDS, and ESIA…HTPG. The stretch at 1151–1187 forms a coiled coil; that stretch reads RAEAEKTAKRKLEATRKAQKAKEDEERRRIQQQQQRS. Residues 1158-1179 are compositionally biased toward basic and acidic residues; the sequence is AKRKLEATRKAQKAKEDEERRR. The span at 1665-1684 shows a compositional bias: polar residues; it reads TSGYDSSGNPIRSITSSGDT. Positions 1852–1861 are enriched in basic and acidic residues; sequence KSEDDRDKPE. 2 DDT domains span residues 1883–1953 and 1948–2014; these read AFHT…EQER and IEEQ…AEGY. 2 PHD-type zinc fingers span residues 1899 to 1950 and 1959 to 2010; these read IEHC…CIEE and ALYC…CTRE. The Bromo domain occupies 2030 to 2134; it reads QLTRADYTHV…EVFDKKLIDV (105 aa).

Belongs to the BPTF family. As to quaternary structure, part of a nucleosome remodeling factor-like (NURF-like) complex containing nurf-1 and isw-1.

The protein resides in the nucleus. In terms of biological role, histone-binding component of a NURF-like (nucleosome remodeling factor-like) complex, which would catalyze ATP-dependent nucleosome sliding and facilitate transcription of chromatin. Involved in vulval cell fates. This chain is Nucleosome-remodeling factor subunit NURF301-like (nurf-1), found in Caenorhabditis elegans.